Consider the following 652-residue polypeptide: MKTRISELVSVLNQYAKEYYQLDQPSVSDAEYDTLYRELVELETAHPELILPDSPTHRVGGKMLDGFEKYSHVYPLFSLQDAFSREELEAFDQRVRKEFPQATYICELKIDGLSISLTYEAGNLVVGATRGDGSVGENITENLKRVADVPLTLPEAVDITVRGECYMPKASFDRVNKQRQEAGEAEFVNPRNAAAGTLRQLDTGVVAQRGLATFLYQEASPSEATSQSQVLEKLDALGFVTNHEYCLAESIDDTWDFIEKIAERRDDLPYEIDGVVIKVNDLAIQEELGFTVKAPRWAVAYKFPAEEKEAEILSVDWTVGRTGVVTPTANLSPVQLAGTTVSRATLHNVDYIAEKDIRIGDTVIVYKAGDIIPAVLKVVDKYRKEQEIMPIPSHCPSCQSDLQHYEDEVALRCINPICPSQLMSKLEHFASRDAMNIAGLGSSIVEKLFGAGLVHDVADIYKLTVDDLLTLEGFKEKSANKLYQAIQTSKSNSAECLLFGLGIRHVGSKASKILVEKFGDLETLAFADQEAIASLEGLGQVIAKSLTTFFASEGAQQLLAELKEAKVNLTYLGQVVDENAALSGMTVVLTGKLERMKRNEAKAKLEALGANVAGSVSKKTNLVVAGTDAGSKLTKAQELGIEIKDEAWLESL.

NAD(+)-binding positions include 29-33 (DAEYD), 78-79 (SL), and glutamate 107. Lysine 109 (N6-AMP-lysine intermediate) is an active-site residue. The NAD(+) site is built by arginine 130, glutamate 164, lysine 278, and lysine 302. Positions 395, 398, 413, and 418 each coordinate Zn(2+). In terms of domain architecture, BRCT spans 577 to 652 (DENAALSGMT…IKDEAWLESL (76 aa)).

This sequence belongs to the NAD-dependent DNA ligase family. LigA subfamily. The cofactor is Mg(2+). It depends on Mn(2+) as a cofactor.

The catalysed reaction is NAD(+) + (deoxyribonucleotide)n-3'-hydroxyl + 5'-phospho-(deoxyribonucleotide)m = (deoxyribonucleotide)n+m + AMP + beta-nicotinamide D-nucleotide.. DNA ligase that catalyzes the formation of phosphodiester linkages between 5'-phosphoryl and 3'-hydroxyl groups in double-stranded DNA using NAD as a coenzyme and as the energy source for the reaction. It is essential for DNA replication and repair of damaged DNA. The sequence is that of DNA ligase from Streptococcus suis (strain 98HAH33).